A 151-amino-acid chain; its full sequence is Small ribosomal subunit protein uS13m (151 aa).

The protein belongs to the universal ribosomal protein uS13 family. As to quaternary structure, component of the mitochondrial small ribosomal subunit (mt-SSU). Mature yeast 74S mitochondrial ribosomes consist of a small (37S) and a large (54S) subunit. The 37S small subunit contains a 15S ribosomal RNA (15S mt-rRNA) and at least 32 different proteins. The 54S large subunit contains a 21S rRNA (21S mt-rRNA) and at least 45 different proteins.

It is found in the mitochondrion. Functionally, component of the mitochondrial ribosome (mitoribosome), a dedicated translation machinery responsible for the synthesis of mitochondrial genome-encoded proteins, including at least some of the essential transmembrane subunits of the mitochondrial respiratory chain. The mitoribosomes are attached to the mitochondrial inner membrane and translation products are cotranslationally integrated into the membrane. In Schizosaccharomyces pombe (strain 972 / ATCC 24843) (Fission yeast), this protein is Small ribosomal subunit protein uS13m (sws2).